The chain runs to 487 residues: Bifunctional protein GlmU (487 aa).

The segment at methionine 1–arginine 232 is pyrophosphorylase. Residues leucine 6–glycine 9, lysine 20, glutamine 77, and glycine 82–threonine 83 contribute to the UDP-N-acetyl-alpha-D-glucosamine site. Aspartate 107 is a Mg(2+) binding site. Positions 142, 157, 172, and 230 each coordinate UDP-N-acetyl-alpha-D-glucosamine. Mg(2+) is bound at residue asparagine 230. Residues valine 233–glycine 253 are linker. The interval glycine 254–glutamate 487 is N-acetyltransferase. The UDP-N-acetyl-alpha-D-glucosamine site is built by arginine 335 and lysine 353. Histidine 365 serves as the catalytic Proton acceptor. UDP-N-acetyl-alpha-D-glucosamine-binding residues include tyrosine 368 and asparagine 379. Acetyl-CoA-binding positions include alanine 382, asparagine 388–tyrosine 389, serine 407, and alanine 425. Residues alanine 453–glutamate 487 form a disordered region. Positions serine 477–glutamate 487 are enriched in polar residues.

The protein in the N-terminal section; belongs to the N-acetylglucosamine-1-phosphate uridyltransferase family. It in the C-terminal section; belongs to the transferase hexapeptide repeat family. Homotrimer. Mg(2+) serves as cofactor.

It localises to the cytoplasm. The enzyme catalyses alpha-D-glucosamine 1-phosphate + acetyl-CoA = N-acetyl-alpha-D-glucosamine 1-phosphate + CoA + H(+). It carries out the reaction N-acetyl-alpha-D-glucosamine 1-phosphate + UTP + H(+) = UDP-N-acetyl-alpha-D-glucosamine + diphosphate. Its pathway is nucleotide-sugar biosynthesis; UDP-N-acetyl-alpha-D-glucosamine biosynthesis; N-acetyl-alpha-D-glucosamine 1-phosphate from alpha-D-glucosamine 6-phosphate (route II): step 2/2. The protein operates within nucleotide-sugar biosynthesis; UDP-N-acetyl-alpha-D-glucosamine biosynthesis; UDP-N-acetyl-alpha-D-glucosamine from N-acetyl-alpha-D-glucosamine 1-phosphate: step 1/1. It participates in bacterial outer membrane biogenesis; LPS lipid A biosynthesis. In terms of biological role, catalyzes the last two sequential reactions in the de novo biosynthetic pathway for UDP-N-acetylglucosamine (UDP-GlcNAc). The C-terminal domain catalyzes the transfer of acetyl group from acetyl coenzyme A to glucosamine-1-phosphate (GlcN-1-P) to produce N-acetylglucosamine-1-phosphate (GlcNAc-1-P), which is converted into UDP-GlcNAc by the transfer of uridine 5-monophosphate (from uridine 5-triphosphate), a reaction catalyzed by the N-terminal domain. This Corynebacterium jeikeium (strain K411) protein is Bifunctional protein GlmU.